The following is a 397-amino-acid chain: (S)-8-oxocitronellyl enol synthase ISY2 (397 aa).

Residues 36–38 (TGL), 64–65 (RR), 82–83 (DV), 106–107 (TW), Gln-144, Tyr-180, Ile-207, and 214–216 (SMM) each bind NADP(+). Residue Tyr-180 is part of the active site.

Belongs to the short-chain dehydrogenases/reductases (SDR) family.

It catalyses the reaction (S)-8-oxocitronellyl enol + NADP(+) = (6E)-8-oxogeranial + NADPH + H(+). The catalysed reaction is (S)-8-oxocitronellyl enol + NAD(+) = (6E)-8-oxogeranial + NADH + H(+). Functionally, iridoid synthase that catalyzes the first step in generation of the iridoid ring scaffold using the linear monoterpene (6E)-8-oxogeranial as substrate. Iridoids comprise a large family of distinctive bicyclic monoterpenes that possess a wide range of pharmacological activities, including anticancer, anti-inflammatory, antifungal and antibacterial activities. Catalyzes the conversion of the linear monoterpene (6E)-8-oxogeranial to (S)-8-oxocitronellyl enol, a precursor of nepetalactones, which are metabolites that are both insect-repellent and have euphoric effect in cats. The chain is (S)-8-oxocitronellyl enol synthase ISY2 from Nepeta cataria (Catnip).